The following is a 406-amino-acid chain: Arginine deiminase (406 aa).

Residue Cys-396 is the Amidino-cysteine intermediate of the active site.

The protein belongs to the arginine deiminase family.

The protein resides in the cytoplasm. The enzyme catalyses L-arginine + H2O = L-citrulline + NH4(+). It functions in the pathway amino-acid degradation; L-arginine degradation via ADI pathway; carbamoyl phosphate from L-arginine: step 1/2. In Vibrio campbellii (strain ATCC BAA-1116), this protein is Arginine deiminase.